The primary structure comprises 438 residues: UDP-N-acetylmuramoylalanine--D-glutamate ligase (438 aa).

Gly-112–Thr-118 provides a ligand contact to ATP.

This sequence belongs to the MurCDEF family.

It localises to the cytoplasm. It catalyses the reaction UDP-N-acetyl-alpha-D-muramoyl-L-alanine + D-glutamate + ATP = UDP-N-acetyl-alpha-D-muramoyl-L-alanyl-D-glutamate + ADP + phosphate + H(+). The protein operates within cell wall biogenesis; peptidoglycan biosynthesis. Functionally, cell wall formation. Catalyzes the addition of glutamate to the nucleotide precursor UDP-N-acetylmuramoyl-L-alanine (UMA). The sequence is that of UDP-N-acetylmuramoylalanine--D-glutamate ligase from Shigella boydii serotype 4 (strain Sb227).